The chain runs to 147 residues: Small ribosomal subunit protein uS9 (147 aa).

The disordered stretch occupies residues 128–147 (KERKKYGQMGARAKYRWSKR).

The protein belongs to the universal ribosomal protein uS9 family.

The sequence is that of Small ribosomal subunit protein uS9 (rpsI) from Aquifex aeolicus (strain VF5).